The following is a 251-amino-acid chain: 3-deoxy-manno-octulosonate cytidylyltransferase (251 aa).

It belongs to the KdsB family.

The protein localises to the cytoplasm. The enzyme catalyses 3-deoxy-alpha-D-manno-oct-2-ulosonate + CTP = CMP-3-deoxy-beta-D-manno-octulosonate + diphosphate. It participates in nucleotide-sugar biosynthesis; CMP-3-deoxy-D-manno-octulosonate biosynthesis; CMP-3-deoxy-D-manno-octulosonate from 3-deoxy-D-manno-octulosonate and CTP: step 1/1. It functions in the pathway bacterial outer membrane biogenesis; lipopolysaccharide biosynthesis. In terms of biological role, activates KDO (a required 8-carbon sugar) for incorporation into bacterial lipopolysaccharide in Gram-negative bacteria. In Rhizobium johnstonii (strain DSM 114642 / LMG 32736 / 3841) (Rhizobium leguminosarum bv. viciae), this protein is 3-deoxy-manno-octulosonate cytidylyltransferase.